Here is a 357-residue protein sequence, read N- to C-terminus: Olfactory receptor 2B2 (357 aa).

Over 1–25 (MNWVNKSVPQEFILLVFSDQPWLEI) the chain is Extracellular. Asparagine 5 carries an N-linked (GlcNAc...) asparagine glycan. A helical membrane pass occupies residues 26 to 49 (PPFVMFLFSYILTIFGNLTIILVS). Residues 50–57 (HVDFKLHT) lie on the Cytoplasmic side of the membrane. The helical transmembrane segment at 58–79 (PMYFFLSNLSLLDLCYTTSTVP) threads the bilayer. The Extracellular portion of the chain corresponds to 80–100 (QMLVNICNTRKVISYGGCVAQ). A disulfide bridge connects residues cysteine 97 and cysteine 189. Residues 101–120 (LFIFLALGSTECLLLAVMCF) traverse the membrane as a helical segment. Topologically, residues 121–139 (DRFVAICRPLHYSIIMHQR) are cytoplasmic. Residues 140-158 (LCFQLAAASWISGFSNSVL) traverse the membrane as a helical segment. The Extracellular portion of the chain corresponds to 159 to 195 (QSTWTLKMPLCGHKEVDHFFCEVPALLKLSCVDTTAN). Residues 196-219 (EAELFFISVLFLLIPVTLILISYA) form a helical membrane-spanning segment. Residues 220 to 236 (FIVQAVLRIQSAEGQRK) lie on the Cytoplasmic side of the membrane. Residues 237 to 259 (AFGTCGSHLIVVSLFYGTAISMY) traverse the membrane as a helical segment. Residues 260–272 (LQPPSPSSKDRGK) lie on the Extracellular side of the membrane. The helical transmembrane segment at 273–292 (MVSLFCGIIAPMLNPLIYTL) threads the bilayer. The Cytoplasmic portion of the chain corresponds to 293–357 (RNKEVKEAFK…YCNLPQRKFP (65 aa)).

The protein belongs to the G-protein coupled receptor 1 family.

The protein resides in the cell membrane. Odorant receptor. The sequence is that of Olfactory receptor 2B2 (OR2B2) from Homo sapiens (Human).